The chain runs to 99 residues: Small ribosomal subunit protein eS24 (99 aa).

The protein belongs to the eukaryotic ribosomal protein eS24 family.

The chain is Small ribosomal subunit protein eS24 from Methanothrix thermoacetophila (strain DSM 6194 / JCM 14653 / NBRC 101360 / PT) (Methanosaeta thermophila).